A 1146-amino-acid chain; its full sequence is Integrin alpha-PS1 (1146 aa).

A signal peptide spans 1-30 (MLELPFTTIRPNCRLRQNLGILIILQCVLT). Topologically, residues 31-1085 (CYNFNLEQRL…NQQRDTSIPW (1055 aa)) are extracellular. FG-GAP repeat units lie at residues 38–105 (QRLP…FDDC), 121–186 (LSPP…FEEV), 193–245 (RPVQ…YLQR), 254–303 (HSDL…KSTD), 304–366 (NPIP…TLPM), 367–422 (KYTL…GLNS), and 432–494 (ELGG…RKEL). Asn68, Asn86, and Asn147 each carry an N-linked (GlcNAc...) asparagine glycan. Residues Asn470, Asn511, Asn657, Asn680, Asn711, Asn718, Asn761, and Asn928 are each glycosylated (N-linked (GlcNAc...) asparagine). A disordered region spans residues 938-958 (YYSSSHRDDHSDDTQSNRNRV). A compositionally biased stretch (basic and acidic residues) spans 942 to 952 (SHRDDHSDDTQ). An N-linked (GlcNAc...) asparagine glycan is attached at Asn1027. The helical transmembrane segment at 1086 to 1106 (LIIILGIVGGLLLLALVTYVL) threads the bilayer. Over 1107–1146 (WKVGFFKRIRPTDPTLSGNLEKMNEEKPFLAPSKNTHHVF) the chain is Cytoplasmic.

The protein belongs to the integrin alpha chain family. In terms of assembly, heterodimer of an alpha and a beta subunit. The alpha subunit is composed of a heavy and a light chain linked by a disulfide bond. Alpha-PS1 associates with beta-PS. Expressed in follicle cells (at protein level). At syncytial blastoderm stage, expressed in the ectoderm but not in the mesodermal precursors. At embryonic stage 7, expressed in dorsal and ventrolateral ectoderm and in some yolk nuclei. At late stage 10, expression is homogeneous in the ectoderm and is particularly abundant in the anterior and posterior midgut primordia. At stage 11, strongly expressed in a metameric pattern in the ectoderm, in the proctodeum and in the posterior midgut primordium. At stage 12, accumulates at the segment boundaries that start to become morphologically visible, similar expression pattern is observed in the central nervous system. In third larval instar wing imaginal disk, strongly expressed in the dorsal compartment, in the adepithelial cells and in patches on the peripodial membrane covering the imaginal disk to the outside.

It is found in the apical cell membrane. The protein localises to the lateral cell membrane. The protein resides in the basal cell membrane. In terms of biological role, integrin alpha-PS1/beta-PS is a receptor for laminin. This is Integrin alpha-PS1 (mew) from Drosophila melanogaster (Fruit fly).